A 182-amino-acid chain; its full sequence is Ribulose bisphosphate carboxylase small subunit, chloroplastic (182 aa).

The N-terminal 58 residues, Met-1–Gln-58, are a transit peptide targeting the chloroplast.

It belongs to the RuBisCO small chain family. As to quaternary structure, heterohexadecamer of 8 large and 8 small subunits.

It is found in the plastid. It localises to the chloroplast. Its function is as follows. RuBisCO catalyzes two reactions: the carboxylation of D-ribulose 1,5-bisphosphate, the primary event in carbon dioxide fixation, as well as the oxidative fragmentation of the pentose substrate. Both reactions occur simultaneously and in competition at the same active site. Although the small subunit is not catalytic it is essential for maximal activity. The protein is Ribulose bisphosphate carboxylase small subunit, chloroplastic of Fagus crenata (Japanese beech).